Consider the following 1480-residue polypeptide: DNA polymerase zeta catalytic subunit (1480 aa).

Residues aspartate 403 to leucine 488 are disordered. Residues proline 411–glutamine 427 show a composition bias toward polar residues. Basic and acidic residues predominate over residues threonine 457–proline 468. Residues arginine 470–glycine 479 show a composition bias toward polar residues. Zn(2+) contacts are provided by cysteine 1381, cysteine 1384, cysteine 1400, and cysteine 1403. The CysA-type zinc-finger motif lies at cysteine 1381–cysteine 1403. [4Fe-4S] cluster contacts are provided by cysteine 1432, cysteine 1435, cysteine 1446, and cysteine 1451. Residues cysteine 1432–cysteine 1451 carry the CysB motif motif.

It belongs to the DNA polymerase type-B family. Forms DNA polymerase zeta with rev7. [4Fe-4S] cluster is required as a cofactor.

The protein resides in the mitochondrion. It is found in the nucleus. The enzyme catalyses DNA(n) + a 2'-deoxyribonucleoside 5'-triphosphate = DNA(n+1) + diphosphate. Its function is as follows. Nonessential DNA polymerase. Required for DNA damage induced mutagenesis. Involved in DNA repair, mitochondrial DNA repair and translesion synthesis. Has a role in the bypass of abasic (AP) sites. In Schizosaccharomyces pombe (strain 972 / ATCC 24843) (Fission yeast), this protein is DNA polymerase zeta catalytic subunit (rev3).